The sequence spans 207 residues: Large ribosomal subunit protein uL4 (207 aa).

It belongs to the universal ribosomal protein uL4 family. Part of the 50S ribosomal subunit.

In terms of biological role, one of the primary rRNA binding proteins, this protein initially binds near the 5'-end of the 23S rRNA. It is important during the early stages of 50S assembly. It makes multiple contacts with different domains of the 23S rRNA in the assembled 50S subunit and ribosome. Its function is as follows. Forms part of the polypeptide exit tunnel. The protein is Large ribosomal subunit protein uL4 of Pelagibacter ubique (strain HTCC1062).